Reading from the N-terminus, the 63-residue chain is Large ribosomal subunit protein bL28 (63 aa).

It belongs to the bacterial ribosomal protein bL28 family.

The sequence is that of Large ribosomal subunit protein bL28 from Geobacter sulfurreducens (strain ATCC 51573 / DSM 12127 / PCA).